The chain runs to 281 residues: Phytanoyl-CoA dioxygenase 1 (281 aa).

2-oxoglutarate is bound by residues K98, M137, 152 to 154 (HQD), and W169. 2 residues coordinate Fe cation: H152 and D154. H237 lines the Fe cation pocket. S239 and R248 together coordinate 2-oxoglutarate.

Belongs to the PhyH family. Fe cation serves as cofactor. It depends on L-ascorbate as a cofactor.

The enzyme catalyses phytanoyl-CoA + 2-oxoglutarate + O2 = 2-hydroxyphytanoyl-CoA + succinate + CO2. Its pathway is lipid metabolism; fatty acid metabolism. Functionally, converts phytanoyl-CoA to 2-hydroxyphytanoyl-CoA. This Oryza sativa subsp. japonica (Rice) protein is Phytanoyl-CoA dioxygenase 1.